Consider the following 394-residue polypeptide: Actin-related protein 2 (394 aa).

At Met-1 the chain carries N-acetylmethionine. ATP is bound by residues 160–162 and 214–218; these read GDG and RMIKE. Lys-299 carries the N6-acetyllysine modification. 305–310 provides a ligand contact to ATP; it reads GGSTMY. Lys-322 is modified (N6-acetyllysine).

It belongs to the actin family. ARP2 subfamily. As to quaternary structure, component of the Arp2/3 complex composed of ACTR2/ARP2, ACTR3/ARP3, ARPC1B/p41-ARC, ARPC2/p34-ARC, ARPC3/p21-ARC, ARPC4/p20-ARC and ARPC5/p16-ARC. Interacts with AVIL.

It localises to the cytoplasm. Its subcellular location is the cytoskeleton. It is found in the cell projection. The protein localises to the nucleus. In terms of biological role, ATP-binding component of the Arp2/3 complex, a multiprotein complex that mediates actin polymerization upon stimulation by nucleation-promoting factor (NPF). The Arp2/3 complex mediates the formation of branched actin networks in the cytoplasm, providing the force for cell motility. Seems to contact the pointed end of the daughter actin filament. In podocytes, required for the formation of lamellipodia downstream of AVIL and PLCE1 regulation. In addition to its role in the cytoplasmic cytoskeleton, the Arp2/3 complex also promotes actin polymerization in the nucleus, thereby regulating gene transcription and repair of damaged DNA. The Arp2/3 complex promotes homologous recombination (HR) repair in response to DNA damage by promoting nuclear actin polymerization, leading to drive motility of double-strand breaks (DSBs). The chain is Actin-related protein 2 (ACTR2) from Pongo abelii (Sumatran orangutan).